A 464-amino-acid chain; its full sequence is MMARRDPKSWAKRLVRAQTLQKQRRAPVGPRAPPPDEEDPRLKCKNCGAFGHTARSTRCPMKCWKAALVPATLGKKEGKENLKPWKPRVEANPGPLNKDKGEKEERPRQQDPQRKALLHMFSGKPPEKPLPNGKGSTESSDHLRVASGPMPVHTTSKRPRVDPVLADRSAAEMSGRGSVLASLSPLRKASLSSSSSLGPKERQTGAAADMPQPAVRHQGREPLLVVKPTHSSPEGGCREVPQAASKTHGLLQAARPQAQDKRPAVTSQPCPPAATHSLGLGSNLSFGPGAKRPAQAPIQACLNFPKKPRLGPFQIPESAIQGGELGAPENLQPPPAATELGPSTSPQMGRRTPAQVPSVDRQPPHSTPCLPTAQACTMSHHSAASHDGAQPLRVLFRRLENGRWSSSLLAAPSFHSPEKPGTFLAQSPHVSEKSEAPCVRVPPSVLYEDLQVSSSSEDSDSDLE.

Disordered stretches follow at residues 1–42 (MMAR…DPRL), 70–389 (PATL…HDGA), and 411–437 (APSFHSPEKPGTFLAQSPHVSEKSEAP). Basic and acidic residues-rich tracts occupy residues 74–89 (GKKEGKENLKPWKPRV) and 97–114 (NKDKGEKEERPRQQDPQR). Low complexity predominate over residues 180 to 197 (LASLSPLRKASLSSSSSL).

This sequence belongs to the FAM90 family.

This is Protein FAM90A9 (FAM90A9) from Homo sapiens (Human).